Consider the following 179-residue polypeptide: Natural killer cells antigen CD94 (179 aa).

Residues 1–10 lie on the Cytoplasmic side of the membrane; it reads MAVSRITRWR. The chain crosses the membrane as a helical; Signal-anchor for type II membrane protein span at residues 11 to 31; it reads LMSVIFGIKCLFLMVTLGVLL. The Extracellular portion of the chain corresponds to 32–179; the sequence is INSFTIQNIQ…NRYICKKLPI (148 aa). Cystine bridges form between Cys58-Cys70, Cys61-Cys72, Cys89-Cys174, and Cys152-Cys166. The region spanning 68-175 is the C-type lectin domain; it reads HQCNCYFISK…CENKNRYICK (108 aa). 2 N-linked (GlcNAc...) asparagine glycosylation sites follow: Asn93 and Asn109.

As to quaternary structure, can form disulfide-bonded heterodimer with NKG2 family members KLRC1 and KLRC2. KLRD1-KLRC1 heterodimer interacts with peptide-bound MHC-E-B2M heterotrimeric complex. KLRD1 plays a prominent role in directly interacting with MHC-E. KLRD1-KLRC1 interacts with much higher affinity with peptide-bound MHC-E-B2M than KLRD1-KLRC2. Interacts with the adapter protein TYROBP/DAP12; this interaction is required for cell surface expression and cell activation.

It is found in the cell membrane. In terms of biological role, immune receptor involved in self-nonself discrimination. In complex with KLRC1 or KLRC2 on cytotoxic and regulatory lymphocyte subsets, recognizes non-classical major histocompatibility (MHC) class Ib molecule MHC-E loaded with self-peptides derived from the signal sequence of classical MHC class Ia and non-classical MHC class Ib molecules. Enables cytotoxic cells to monitor the expression of MHC class I molecules in healthy cells and to tolerate self. Primarily functions as a ligand binding subunit as it lacks the capacity to signal. Functionally, KLRD1-KLRC1 acts as an immune inhibitory receptor. Key inhibitory receptor on natural killer (NK) cells that regulates their activation and effector functions. Dominantly counteracts T cell receptor signaling on a subset of memory/effector CD8-positive T cells as part of an antigen-driven response to avoid autoimmunity. On intraepithelial CD8-positive gamma-delta regulatory T cells triggers TGFB1 secretion, which in turn limits the cytotoxic programming of intraepithelial CD8-positive alpha-beta T cells, distinguishing harmless from pathogenic antigens. In MHC-E-rich tumor microenvironment, acts as an immune inhibitory checkpoint and may contribute to progressive loss of effector functions of NK cells and tumor-specific T cells, a state known as cell exhaustion. Upon MHC-E-peptide binding, transmits intracellular signals through KLRC1 immunoreceptor tyrosine-based inhibition motifs (ITIMs) by recruiting INPP5D/SHIP-1 and INPPL1/SHIP-2 tyrosine phosphatases to ITIMs, and ultimately opposing signals transmitted by activating receptors through dephosphorylation of proximal signaling molecules. Its function is as follows. KLRD1-KLRC2 acts as an immune activating receptor. On cytotoxic lymphocyte subsets recognizes MHC-E loaded with signal sequence-derived peptides from non-classical MHC class Ib MHC-G molecules, likely playing a role in the generation and effector functions of adaptive NK cells and in maternal-fetal tolerance during pregnancy. Regulates the effector functions of terminally differentiated cytotoxic lymphocyte subsets, and in particular may play a role in adaptive NK cell response to viral infection. Upon MHC-E-peptide binding, transmits intracellular signals via the adapter protein TYROBP/DAP12, triggering the phosphorylation of proximal signaling molecules and cell activation. This is Natural killer cells antigen CD94 (Klrd1) from Mus musculus (Mouse).